Here is a 78-residue protein sequence, read N- to C-terminus: Short neurotoxin SNTX6 (78 aa).

Residues 1–21 (MKTLLLTFLVVTIVCLDLGYT) form the signal peptide. Disulfide bonds link C24–C40, C33–C58, C62–C70, and C71–C76.

It belongs to the three-finger toxin family. Short-chain subfamily. In terms of tissue distribution, expressed by the venom gland.

The protein localises to the secreted. This three-finger toxin binds and inhibits the nicotinic acetylcholine receptor (nAChR). The sequence is that of Short neurotoxin SNTX6 from Ophiophagus hannah (King cobra).